The sequence spans 101 residues: ATP-dependent Clp protease adapter protein ClpS (101 aa).

The disordered stretch occupies residues 1 to 24 (MVVASAPAKPGSVGQQESASRDAT). The span at 13-23 (VGQQESASRDA) shows a compositional bias: polar residues.

It belongs to the ClpS family. Binds to the N-terminal domain of the chaperone ClpA.

In terms of biological role, involved in the modulation of the specificity of the ClpAP-mediated ATP-dependent protein degradation. The protein is ATP-dependent Clp protease adapter protein ClpS of Mycobacterium marinum (strain ATCC BAA-535 / M).